The primary structure comprises 204 residues: Somatotropin (204 aa).

The signal sequence occupies residues 1–17 (MDRAILLLSVVCLVVSS). Gln18 carries the pyrrolidone carboxylic acid modification. His36 lines the Zn(2+) pocket. Residues Cys69 and Cys177 are joined by a disulfide bond. Residue Glu186 coordinates Zn(2+). Cys194 and Cys202 are disulfide-bonded.

The protein belongs to the somatotropin/prolactin family.

Its subcellular location is the secreted. Growth hormone plays an important role in growth control and is involved in the regulation of several anabolic processes. Implicated as an osmoregulatory substance important for seawater adaptation. This chain is Somatotropin (gh), found in Odontesthes argentinensis (Marine silverside).